The sequence spans 600 residues: Proline--tRNA ligase (600 aa).

It belongs to the class-II aminoacyl-tRNA synthetase family. ProS type 1 subfamily. Homodimer.

It localises to the cytoplasm. The enzyme catalyses tRNA(Pro) + L-proline + ATP = L-prolyl-tRNA(Pro) + AMP + diphosphate. Its function is as follows. Catalyzes the attachment of proline to tRNA(Pro) in a two-step reaction: proline is first activated by ATP to form Pro-AMP and then transferred to the acceptor end of tRNA(Pro). As ProRS can inadvertently accommodate and process non-cognate amino acids such as alanine and cysteine, to avoid such errors it has two additional distinct editing activities against alanine. One activity is designated as 'pretransfer' editing and involves the tRNA(Pro)-independent hydrolysis of activated Ala-AMP. The other activity is designated 'posttransfer' editing and involves deacylation of mischarged Ala-tRNA(Pro). The misacylated Cys-tRNA(Pro) is not edited by ProRS. This is Proline--tRNA ligase from Prochlorococcus marinus (strain MIT 9301).